A 452-amino-acid polypeptide reads, in one-letter code: Glutamate--tRNA ligase 2 (452 aa).

Positions 8–18 match the 'HIGH' region motif; the sequence is PSPTGRLHVGN. The short motif at 246-250 is the 'KMSKS' region element; it reads KLSKR. An ATP-binding site is contributed by K249.

It belongs to the class-I aminoacyl-tRNA synthetase family. Glutamate--tRNA ligase type 1 subfamily. As to quaternary structure, monomer.

Its subcellular location is the cytoplasm. It carries out the reaction tRNA(Glu) + L-glutamate + ATP = L-glutamyl-tRNA(Glu) + AMP + diphosphate. Functionally, catalyzes the attachment of glutamate to tRNA(Glu) in a two-step reaction: glutamate is first activated by ATP to form Glu-AMP and then transferred to the acceptor end of tRNA(Glu). The polypeptide is Glutamate--tRNA ligase 2 (Erythrobacter litoralis (strain HTCC2594)).